The primary structure comprises 422 residues: Monoacylglycerol lipase ABHD2 (422 aa).

Topologically, residues 1–15 (MSAQLEADVRTMSPE) are cytoplasmic. The helical; Signal-anchor for type II membrane protein transmembrane segment at 16–36 (MPAMFDGMKLAAVAAVLYVIV) threads the bilayer. At 37 to 422 (RSLNLKCPTA…HKPQCHQQKE (386 aa)) the chain is on the extracellular side. The AB hydrolase-1 domain occupies 134–385 (MVICPGIGNH…HGGHLGFFEG (252 aa)). Asn142 carries N-linked (GlcNAc...) asparagine glycosylation. Ser213 serves as the catalytic Nucleophile. Residues Asn285, Asn335, and Asn344 are each glycosylated (N-linked (GlcNAc...) asparagine). Catalysis depends on charge relay system residues Asp348 and His379.

This sequence belongs to the AB hydrolase superfamily. AB hydrolase 4 family.

It localises to the cell membrane. It carries out the reaction Hydrolyzes glycerol monoesters of long-chain fatty acids.. The enzyme catalyses an acetyl ester + H2O = an aliphatic alcohol + acetate + H(+). It catalyses the reaction a triacylglycerol + H2O = a diacylglycerol + a fatty acid + H(+). The catalysed reaction is 2-(5Z,8Z,11Z,14Z-eicosatetraenoyl)-glycerol + H2O = glycerol + (5Z,8Z,11Z,14Z)-eicosatetraenoate + H(+). It carries out the reaction a butanoate ester + H2O = an aliphatic alcohol + butanoate + H(+). The enzyme catalyses hexadecanoate ester + H2O = an aliphatic alcohol + hexadecanoate + H(+). With respect to regulation, acylglycerol lipase activity is activated upon binding to progesterone. Its function is as follows. Progesterone-dependent acylglycerol lipase that catalyzes hydrolysis of endocannabinoid arachidonoylglycerol (AG) from cell membrane. Acts as a progesterone receptor: progesterone-binding activates the acylglycerol lipase activity, mediating degradation of 1-arachidonoylglycerol (1AG) and 2-arachidonoylglycerol (2AG) to glycerol and arachidonic acid (AA). Also displays an ester hydrolase activity against acetyl ester, butanoate ester and hexadecanoate ester. Plays a key role in sperm capacitation in response to progesterone by mediating degradation of 2AG, an inhibitor of the sperm calcium channel CatSper, leading to calcium influx via CatSper and sperm activation. May also play a role in smooth muscle cells migration. This Danio rerio (Zebrafish) protein is Monoacylglycerol lipase ABHD2 (abhd2b).